A 97-amino-acid polypeptide reads, in one-letter code: Aspartyl/glutamyl-tRNA(Asn/Gln) amidotransferase subunit C (97 aa).

The protein belongs to the GatC family. As to quaternary structure, heterotrimer of A, B and C subunits.

The enzyme catalyses L-glutamyl-tRNA(Gln) + L-glutamine + ATP + H2O = L-glutaminyl-tRNA(Gln) + L-glutamate + ADP + phosphate + H(+). It catalyses the reaction L-aspartyl-tRNA(Asn) + L-glutamine + ATP + H2O = L-asparaginyl-tRNA(Asn) + L-glutamate + ADP + phosphate + 2 H(+). Functionally, allows the formation of correctly charged Asn-tRNA(Asn) or Gln-tRNA(Gln) through the transamidation of misacylated Asp-tRNA(Asn) or Glu-tRNA(Gln) in organisms which lack either or both of asparaginyl-tRNA or glutaminyl-tRNA synthetases. The reaction takes place in the presence of glutamine and ATP through an activated phospho-Asp-tRNA(Asn) or phospho-Glu-tRNA(Gln). This chain is Aspartyl/glutamyl-tRNA(Asn/Gln) amidotransferase subunit C, found in Synechococcus sp. (strain CC9311).